We begin with the raw amino-acid sequence, 250 residues long: Aquaporin TIP2-1 (250 aa).

Met1 carries the post-translational modification N-acetylmethionine. Over 1–20 the chain is Cytoplasmic; it reads MAGVAFGSFDDSFSLASLRA. Ala2 carries the post-translational modification N-acetylalanine; in Aquaporin TIP2-1, N-terminally processed. The helical transmembrane segment at 21–41 threads the bilayer; that stretch reads YLAEFISTLLFVFAGVGSAIA. At 42–54 the chain is on the vacuolar side; sequence YAKLTSDAALDTP. A helical transmembrane segment spans residues 55-75; the sequence is GLVAIAVCHGFALFVAVAIGA. Residues 76 to 98 lie on the Cytoplasmic side of the membrane; the sequence is NISGGHVNPAVTFGLAVGGQITV. Residues 83–85 carry the NPA 1 motif; that stretch reads NPA. Residues 99-119 form a helical membrane-spanning segment; that stretch reads ITGVFYWIAQLLGSTAACFLL. Residues 120 to 141 lie on the Vacuolar side of the membrane; the sequence is KYVTGGLAVPTHSVAAGLGSIE. The chain crosses the membrane as a helical span at residues 142–162; the sequence is GVVMEIIITFALVYTVYATAA. Residues 163-168 are Cytoplasmic-facing; the sequence is DPKKGS. A helical transmembrane segment spans residues 169–189; the sequence is LGTIAPLAIGLIVGANILAAG. Residues 190-215 are Vacuolar-facing; that stretch reads PFSGGSMNPARSFGPAVAAGDFSGHW. Residues 197–199 carry the NPA 2 motif; that stretch reads NPA. Residues 216–236 form a helical membrane-spanning segment; it reads VYWVGPLIGGGLAGLIYGNVF. Topologically, residues 237–250 are cytoplasmic; the sequence is MGSSEHVPLASADF.

Belongs to the MIP/aquaporin (TC 1.A.8) family. TIP (TC 1.A.8.10) subfamily. Interacts with cucumber mosaic virus (CMV) Protein 1a. In terms of tissue distribution, strongly expressed in shoot, rosette, bolt and flowers. Also expressed in roots, flower buds and above ground.

The protein localises to the vacuole membrane. Functionally, aquaporin required to facilitate the transport of water from the vacuolar compartment to the cytoplasm. Does not promote glycerol permeability. Its function is impaired by Hg(2+). Transports urea in yeast cells and Xenopus laevis oocytes in a pH-independent manner. Transports methylammonium or ammonium in yeast cells and Xenopus laevis oocytes, preferentially at high medium pH. May participate in vacuolar compartmentation and detoxification of ammonium. The sequence is that of Aquaporin TIP2-1 (TIP2-1) from Arabidopsis thaliana (Mouse-ear cress).